Here is a 116-residue protein sequence, read N- to C-terminus: Large ribosomal subunit protein uL18 (116 aa).

The protein belongs to the universal ribosomal protein uL18 family. Part of the 50S ribosomal subunit; part of the 5S rRNA/L5/L18/L25 subcomplex. Contacts the 5S and 23S rRNAs.

Functionally, this is one of the proteins that bind and probably mediate the attachment of the 5S RNA into the large ribosomal subunit, where it forms part of the central protuberance. In Shewanella sediminis (strain HAW-EB3), this protein is Large ribosomal subunit protein uL18.